The primary structure comprises 115 residues: Meromycolate extension acyl carrier protein (115 aa).

The Carrier domain maps to 3 to 81 (VTQEEIIAGI…DVVAYIQKLE (79 aa)). Ser41 is modified (O-(pantetheine 4'-phosphoryl)serine).

Belongs to the acyl carrier protein (ACP) family. Post-translationally, 4'-phosphopantetheine is transferred from CoA to a specific serine of apo-AcpM.

It is found in the cytoplasm. Its function is as follows. Acyl carrier protein involved in meromycolate extension. The protein is Meromycolate extension acyl carrier protein (acpM) of Mycobacterium bovis (strain ATCC BAA-935 / AF2122/97).